A 218-amino-acid chain; its full sequence is Major NAD(P)H-flavin oxidoreductase (218 aa).

FMN is bound by residues 12 to 16 (RYTSK) and N73. 154 to 159 (LARLNI) is a binding site for NAD(+). FMN contacts are provided by residues 165–166 (EG) and 206–208 (KSR).

Belongs to the nitroreductase family. In terms of assembly, homodimer. FMN serves as cofactor.

Its function is as follows. Involved in bioluminescence. It is a good supplier of reduced flavin mononucleotide (FMNH2) to the bioluminescence reaction. Major FMN reductase. It is capable of using both NADH and NADPH as electron donors. As electron acceptor, FMN is the most effective, FAD is considerably effective, and riboflavin is the least effective. This chain is Major NAD(P)H-flavin oxidoreductase, found in Aliivibrio fischeri (Vibrio fischeri).